The sequence spans 457 residues: Bifunctional protein GlmU (457 aa).

Positions 1–229 (MYNCAIILAA…YEEIMGVNSR (229 aa)) are pyrophosphorylase. Residues 8-11 (LAAG), lysine 22, glutamine 73, and 78-79 (GT) each bind UDP-N-acetyl-alpha-D-glucosamine. Position 103 (aspartate 103) interacts with Mg(2+). Residues glycine 140, glutamate 155, asparagine 170, and asparagine 227 each coordinate UDP-N-acetyl-alpha-D-glucosamine. Mg(2+) is bound at residue asparagine 227. A linker region spans residues 230–250 (VQLSEAEIVMRKRINHKHMVN). The tract at residues 251-457 (GVTFIDCEST…WLDKKGLLKK (207 aa)) is N-acetyltransferase. 2 residues coordinate UDP-N-acetyl-alpha-D-glucosamine: arginine 332 and lysine 350. Residue histidine 362 is the Proton acceptor of the active site. Positions 365 and 376 each coordinate UDP-N-acetyl-alpha-D-glucosamine. Acetyl-CoA-binding positions include 385 to 386 (NY), alanine 422, and arginine 439.

The protein in the N-terminal section; belongs to the N-acetylglucosamine-1-phosphate uridyltransferase family. This sequence in the C-terminal section; belongs to the transferase hexapeptide repeat family. Homotrimer. Mg(2+) serves as cofactor.

Its subcellular location is the cytoplasm. It carries out the reaction alpha-D-glucosamine 1-phosphate + acetyl-CoA = N-acetyl-alpha-D-glucosamine 1-phosphate + CoA + H(+). The enzyme catalyses N-acetyl-alpha-D-glucosamine 1-phosphate + UTP + H(+) = UDP-N-acetyl-alpha-D-glucosamine + diphosphate. Its pathway is nucleotide-sugar biosynthesis; UDP-N-acetyl-alpha-D-glucosamine biosynthesis; N-acetyl-alpha-D-glucosamine 1-phosphate from alpha-D-glucosamine 6-phosphate (route II): step 2/2. It participates in nucleotide-sugar biosynthesis; UDP-N-acetyl-alpha-D-glucosamine biosynthesis; UDP-N-acetyl-alpha-D-glucosamine from N-acetyl-alpha-D-glucosamine 1-phosphate: step 1/1. It functions in the pathway bacterial outer membrane biogenesis; LPS lipid A biosynthesis. Functionally, catalyzes the last two sequential reactions in the de novo biosynthetic pathway for UDP-N-acetylglucosamine (UDP-GlcNAc). The C-terminal domain catalyzes the transfer of acetyl group from acetyl coenzyme A to glucosamine-1-phosphate (GlcN-1-P) to produce N-acetylglucosamine-1-phosphate (GlcNAc-1-P), which is converted into UDP-GlcNAc by the transfer of uridine 5-monophosphate (from uridine 5-triphosphate), a reaction catalyzed by the N-terminal domain. The chain is Bifunctional protein GlmU from Clostridium botulinum (strain Kyoto / Type A2).